The sequence spans 306 residues: Choline-binding protein (306 aa).

A signal peptide spans 1–22; sequence MKRKYLKLMIGLALAATLTLSG. Cys-23 is lipidated: N-palmitoyl cysteine. Cys-23 carries S-diacylglycerol cysteine lipidation.

This sequence belongs to the OsmX family.

The protein localises to the cell membrane. Its function is as follows. Member of a high affinity multicomponent binding-protein-dependent transport system for choline. The sequence is that of Choline-binding protein (opuBC) from Bacillus subtilis (strain 168).